The sequence spans 242 residues: Biosynthetic peptidoglycan transglycosylase (242 aa).

Residues 19-39 form a helical membrane-spanning segment; the sequence is LMVVLAVFWGGGIALFSVAPV.

The protein belongs to the glycosyltransferase 51 family.

It localises to the cell inner membrane. The enzyme catalyses [GlcNAc-(1-&gt;4)-Mur2Ac(oyl-L-Ala-gamma-D-Glu-L-Lys-D-Ala-D-Ala)](n)-di-trans,octa-cis-undecaprenyl diphosphate + beta-D-GlcNAc-(1-&gt;4)-Mur2Ac(oyl-L-Ala-gamma-D-Glu-L-Lys-D-Ala-D-Ala)-di-trans,octa-cis-undecaprenyl diphosphate = [GlcNAc-(1-&gt;4)-Mur2Ac(oyl-L-Ala-gamma-D-Glu-L-Lys-D-Ala-D-Ala)](n+1)-di-trans,octa-cis-undecaprenyl diphosphate + di-trans,octa-cis-undecaprenyl diphosphate + H(+). Its pathway is cell wall biogenesis; peptidoglycan biosynthesis. Functionally, peptidoglycan polymerase that catalyzes glycan chain elongation from lipid-linked precursors. In Escherichia coli (strain ATCC 8739 / DSM 1576 / NBRC 3972 / NCIMB 8545 / WDCM 00012 / Crooks), this protein is Biosynthetic peptidoglycan transglycosylase.